Here is a 275-residue protein sequence, read N- to C-terminus: Dermonecrotic toxin SpaSicTox-betaIIA3 (275 aa).

Residue histidine 5 is part of the active site. Residues glutamate 25 and aspartate 27 each coordinate Mg(2+). Histidine 41 serves as the catalytic Nucleophile. 2 disulfide bridges follow: cysteine 45–cysteine 51 and cysteine 47–cysteine 190. Aspartate 85 lines the Mg(2+) pocket.

The protein belongs to the arthropod phospholipase D family. Class II subfamily. The cofactor is Mg(2+). Expressed by the venom gland.

The protein resides in the secreted. The catalysed reaction is an N-(acyl)-sphingosylphosphocholine = an N-(acyl)-sphingosyl-1,3-cyclic phosphate + choline. It catalyses the reaction an N-(acyl)-sphingosylphosphoethanolamine = an N-(acyl)-sphingosyl-1,3-cyclic phosphate + ethanolamine. It carries out the reaction a 1-acyl-sn-glycero-3-phosphocholine = a 1-acyl-sn-glycero-2,3-cyclic phosphate + choline. The enzyme catalyses a 1-acyl-sn-glycero-3-phosphoethanolamine = a 1-acyl-sn-glycero-2,3-cyclic phosphate + ethanolamine. In terms of biological role, dermonecrotic toxins cleave the phosphodiester linkage between the phosphate and headgroup of certain phospholipids (sphingolipid and lysolipid substrates), forming an alcohol (often choline) and a cyclic phosphate. This toxin acts on sphingomyelin (SM). It may also act on ceramide phosphoethanolamine (CPE), lysophosphatidylcholine (LPC) and lysophosphatidylethanolamine (LPE), but not on lysophosphatidylserine (LPS), and lysophosphatidylglycerol (LPG). It acts by transphosphatidylation, releasing exclusively cyclic phosphate products as second products. Induces dermonecrosis, hemolysis, increased vascular permeability, edema, inflammatory response, and platelet aggregation. The polypeptide is Dermonecrotic toxin SpaSicTox-betaIIA3 (Sicarius patagonicus (Six-eyed sand spider)).